The primary structure comprises 127 residues: Mating pheromone 4 (127 aa).

The N-terminal stretch at 1 to 16 is a signal peptide; that stretch reads MKAIFIILAILMVTQA. A propeptide spanning residues 17–42 is cleaved from the precursor; it reads FKMTSKVKSMNMSRNMSKNTSTLGTK.

Its subcellular location is the secreted. In terms of biological role, mating ciliate pheromones (or gamones) are diffusible extracellular communication signals that distinguish different intraspecific classes of cells commonly referred to as 'mating types'. They prepare the latter for conjugation by changing their cell surface properties. The polypeptide is Mating pheromone 4 (PHR4) (Euplotoides octocarinatus (Freshwater ciliate)).